The sequence spans 615 residues: DNA mismatch repair protein MutL (615 aa).

Residues 362–397 form a disordered region; sequence HFAEPAVREPVAPRYTPAPASGSRPAAPWPNAQPGY. Residues 378–391 show a composition bias toward low complexity; sequence PAPASGSRPAAPWP.

Belongs to the DNA mismatch repair MutL/HexB family.

In terms of biological role, this protein is involved in the repair of mismatches in DNA. It is required for dam-dependent methyl-directed DNA mismatch repair. May act as a 'molecular matchmaker', a protein that promotes the formation of a stable complex between two or more DNA-binding proteins in an ATP-dependent manner without itself being part of a final effector complex. The polypeptide is DNA mismatch repair protein MutL (Escherichia coli O17:K52:H18 (strain UMN026 / ExPEC)).